Reading from the N-terminus, the 343-residue chain is MEYARLGDSGLKVSKVILGCMGYGSPEWQGWVLNEEESLPLIEHAYNKGIRTWDTADMYSHGKSEEIVGKALKKYNIPRSRVVILTKCYFGVDDQGNFPSPLSTGRQNEGDYLNRVGLSRRHILEAVDASVERLGTYIDVLQIHRLDRETPREEIMRALNDVVESGKARYIGASSMAAWEFQTLQNIAIRNGWHKFISMQNYHNLIAREEEREMIPYCLDSGVSLIPWSPVARGALARPWASRSTLRENTDAGISILVRARESESDKAIIDRVEELADKKGISMAQVAIAWSLSHPSEYPIVGLNTKDRIDEAVASVQVKLTPEEIQYLEEPYVPKAIHPGER.

The Proton donor role is filled by tyrosine 59. Histidine 144 lines the substrate pocket. 229-239 provides a ligand contact to NADP(+); sequence SPVARGALARP.

It belongs to the aldo/keto reductase family. Aldo/keto reductase 2 subfamily.

It catalyses the reaction (2S)-versicolorone + NADP(+) = 1'-hydroxyversicolorone + NADPH + H(+). The enzyme catalyses (3S)-versiconol acetate + NADP(+) = (2S,3S)-versiconal hemiacetal acetate + NADPH + H(+). It carries out the reaction (S)-versiconol + NADP(+) = (2S-3S)-versiconal hemiacetal + NADPH + H(+). Its function is as follows. Catalyzes 3 reactions: from hydroxyversicolorone (HVN) to versicolorone (VONE), from versiconal hemiacetal acetate (VHA) to versiconol acetate (VOAc) and from versiconal (VHOH) to versiconol (VOH). Probably not an aflatoxin biosynthesis gene: may be involved in the vertical branching steps connecting the main pathway from HVN to VHOH with the side pathway from VONE to VOH. In Aspergillus parasiticus, this protein is Versiconal hemiacetal acetate reductase (vrdA).